Reading from the N-terminus, the 229-residue chain is MALADDLKKWVGETFTGKWEVQETTSVPNPEDLRLNSNHAKDLKAATVLYADLDGSTDMVNTKKWQFSAQIYKTFLKCASDIIRDEGGNITAYDGDRVMAVFTGNSKNTSAARCALKINSAVLDIIQPAIAKKWQTDFVLRHVVGIDTSQLRTARIGIRGDNDLVWIGRAANYAAKLTNLAGKPTRITADVYNKLADKLKYANGVDMWAPEHWDDMGIWTYTSTWKWTV.

Residues 47–178 (TVLYADLDGS…RAANYAAKLT (132 aa)) form the Guanylate cyclase domain. Residue Tyr50 coordinates a ribonucleoside 5'-triphosphate. Asp52 and Asp96 together coordinate Mn(2+). Arg97 is an a ribonucleoside 5'-triphosphate binding site.

The protein belongs to the adenylyl cyclase class-4/guanylyl cyclase family. Pyrimidine cyclase subfamily. As to quaternary structure, homodimer. Requires Mn(2+) as cofactor.

Its subcellular location is the cytoplasm. The enzyme catalyses UTP = 3',5'-cyclic UMP + diphosphate. Functionally, pycsar (pyrimidine cyclase system for antiphage resistance) provides immunity against bacteriophage. The pyrimidine cyclase (PycC) synthesizes cyclic nucleotides in response to infection; these serve as specific second messenger signals. The signals activate the adjacent effector, leading to bacterial cell death and abortive phage infection. A clade B Pycsar system. Its function is as follows. The pyrimidine cyclase gene of a two-gene Pycsar system, generates cyclic UMP (cUMP) from UTP, has little to no activity on ATP, CTP or GTP. Expression of this and adjacent effector BcPycTIR (AC A0A0J5WTU0) probably confers resistance to bacteriophage. The genes are probably only expressed in response to bacteriophage infection. The protein is Uridylate cyclase of Burkholderia cepacia (Pseudomonas cepacia).